A 433-amino-acid chain; its full sequence is Glutamate-1-semialdehyde 2,1-aminomutase (433 aa).

The residue at position 271 (Lys271) is an N6-(pyridoxal phosphate)lysine.

This sequence belongs to the class-III pyridoxal-phosphate-dependent aminotransferase family. HemL subfamily. As to quaternary structure, homodimer. It depends on pyridoxal 5'-phosphate as a cofactor.

The protein localises to the cytoplasm. The enzyme catalyses (S)-4-amino-5-oxopentanoate = 5-aminolevulinate. The protein operates within porphyrin-containing compound metabolism; protoporphyrin-IX biosynthesis; 5-aminolevulinate from L-glutamyl-tRNA(Glu): step 2/2. It functions in the pathway porphyrin-containing compound metabolism; chlorophyll biosynthesis. This chain is Glutamate-1-semialdehyde 2,1-aminomutase, found in Prochlorococcus marinus (strain MIT 9215).